Reading from the N-terminus, the 267-residue chain is Thyroxine 5-deiodinase (267 aa).

At 1-15 the chain is on the cytoplasmic side; sequence MHDSGGVQMARALKH. The helical; Signal-anchor for type II membrane protein transmembrane segment at 16–36 threads the bilayer; sequence AALCLMLLPRFLLAAVMLWLL. Residues 37-267 lie on the Extracellular side of the membrane; the sequence is DFLCIRKKVL…VNSQTAVLHV (231 aa). The active site involves Sec-131. Position 131 (Sec-131) is a non-standard amino acid, selenocysteine.

The protein belongs to the iodothyronine deiodinase family. In terms of assembly, monomer. Homodimer. May undergo minor heretodimerization with DIO1 and DIO2.

It is found in the cell membrane. The protein resides in the endosome membrane. The catalysed reaction is 3,3',5'-triiodo-L-thyronine + iodide + A + H(+) = L-thyroxine + AH2. The enzyme catalyses 3,3'-diiodo-L-thyronine + iodide + A + H(+) = 3,3',5-triiodo-L-thyronine + AH2. It catalyses the reaction 3-iodo-L-thyronine + iodide + A + H(+) = 3,5-diiodo-L-thyronine + AH2. It carries out the reaction L-thyronine + iodide + A + H(+) = 3-iodo-L-thyronine + AH2. The catalysed reaction is 3',5'-diiodo-L-thyronine + iodide + A + H(+) = 3,3',5'-triiodo-L-thyronine + AH2. The enzyme catalyses 3'-iodo-L-thyronine + iodide + A + H(+) = 3,3'-diiodo-L-thyronine + AH2. It catalyses the reaction 3,3',5'-triiodothyronamine + iodide + A + H(+) = 3,3',5,5'-tetraiodothyronamine + AH2. It carries out the reaction 3',5'-diiodothyronamine + iodide + A + H(+) = 3,3',5'-triiodothyronamine + AH2. The catalysed reaction is 3,3'-diiodothyronamine + iodide + A + H(+) = 3,3',5-triiodothyronamine + AH2. The enzyme catalyses 3-iodothyronamine + iodide + A + H(+) = 3,5-diiodothyronamine + AH2. It catalyses the reaction 3'-iodothyronamine + iodide + A + H(+) = 3,3'-diiodothyronamine + AH2. It carries out the reaction thyronamine + iodide + A + H(+) = 3-iodothyronamine + AH2. In terms of biological role, plays a crucial role in the metabolism of thyroid hormones (TH) and has specific roles in TH activation and inactivation by deiodination. Catalyzes the deiodination of L-thyroxine (T4) to 3,3',5'-triiodothyronine (rT3), 3,5,3'-triiodothyronine (T3) to 3,3'-diiodothyronine (3,3'-T2), 3,5-diiodothyronine (3,5-T2) to 3-monoiodothyronine (3-T1), rT3 to 3',5'-diiodothyronine (3',5'-T2) and 3,3'-T2 to 3'-monoiodothyronine (3'-T1) via inner-ring deiodination (IRD). Catalyzes the deiodination of 3-T1 to L-thyronine (T0) via outer-ring deiodination (ORD). Catalyzes the tyrosyl ring deiodinations of 3,3',5,5'-tetraiodothyronamine, 3,3',5'-triiodothyronamine, 3,5,3'-triiodothyronamine, 3,5-diiodothyronamine, 3,3'-diiodothyronamine and 3-iodothyronamine. The protein is Thyroxine 5-deiodinase (dio3) of Sparus aurata (Gilthead sea bream).